The following is a 497-amino-acid chain: Probable malate:quinone oxidoreductase (497 aa).

The protein belongs to the MQO family. FAD serves as cofactor.

The enzyme catalyses (S)-malate + a quinone = a quinol + oxaloacetate. It functions in the pathway carbohydrate metabolism; tricarboxylic acid cycle; oxaloacetate from (S)-malate (quinone route): step 1/1. The protein is Probable malate:quinone oxidoreductase of Flavobacterium johnsoniae (strain ATCC 17061 / DSM 2064 / JCM 8514 / BCRC 14874 / CCUG 350202 / NBRC 14942 / NCIMB 11054 / UW101) (Cytophaga johnsonae).